The following is a 198-amino-acid chain: Small ribosomal subunit protein uS4 (198 aa).

The region spanning leucine 88–valine 153 is the S4 RNA-binding domain.

Belongs to the universal ribosomal protein uS4 family. Part of the 30S ribosomal subunit. Contacts protein S5. The interaction surface between S4 and S5 is involved in control of translational fidelity.

One of the primary rRNA binding proteins, it binds directly to 16S rRNA where it nucleates assembly of the body of the 30S subunit. Functionally, with S5 and S12 plays an important role in translational accuracy. The protein is Small ribosomal subunit protein uS4 of Lachnoclostridium phytofermentans (strain ATCC 700394 / DSM 18823 / ISDg) (Clostridium phytofermentans).